A 574-amino-acid chain; its full sequence is DNA mismatch repair protein MutL (574 aa).

It belongs to the DNA mismatch repair MutL/HexB family.

This protein is involved in the repair of mismatches in DNA. It is required for dam-dependent methyl-directed DNA mismatch repair. May act as a 'molecular matchmaker', a protein that promotes the formation of a stable complex between two or more DNA-binding proteins in an ATP-dependent manner without itself being part of a final effector complex. The protein is DNA mismatch repair protein MutL of Coxiella burnetii (strain Dugway 5J108-111).